The primary structure comprises 166 residues: Interferon gamma (166 aa).

The signal sequence occupies residues 1 to 23; sequence MNYTSYILAFQLCVILGSSGCYC. Gln-24 is subject to Pyrrolidone carboxylic acid. N-linked (GlcNAc...) asparagine glycans are attached at residues Asn-39 and Asn-106.

The protein belongs to the type II (or gamma) interferon family. As to quaternary structure, homodimer. Interacts with IFNGR1 (via extracellular domain); this interaction promotes IFNGR1 dimerization. As to expression, released primarily from activated T lymphocytes.

The protein localises to the secreted. In terms of biological role, type II interferon produced by immune cells such as T-cells and NK cells that plays crucial roles in antimicrobial, antiviral, and antitumor responses by activating effector immune cells and enhancing antigen presentation. Primarily signals through the JAK-STAT pathway after interaction with its receptor IFNGR1 to affect gene regulation. Upon IFNG binding, IFNGR1 intracellular domain opens out to allow association of downstream signaling components JAK2, JAK1 and STAT1, leading to STAT1 activation, nuclear translocation and transcription of IFNG-regulated genes. Many of the induced genes are transcription factors such as IRF1 that are able to further drive regulation of a next wave of transcription. Plays a role in class I antigen presentation pathway by inducing a replacement of catalytic proteasome subunits with immunoproteasome subunits. In turn, increases the quantity, quality, and repertoire of peptides for class I MHC loading. Increases the efficiency of peptide generation also by inducing the expression of activator PA28 that associates with the proteasome and alters its proteolytic cleavage preference. Up-regulates as well MHC II complexes on the cell surface by promoting expression of several key molecules such as cathepsins B/CTSB, H/CTSH, and L/CTSL. Participates in the regulation of hematopoietic stem cells during development and under homeostatic conditions by affecting their development, quiescence, and differentiation. The polypeptide is Interferon gamma (IFNG) (Camelus bactrianus (Bactrian camel)).